Here is a 466-residue protein sequence, read N- to C-terminus: Myocardial zonula adherens protein (466 aa).

The segment covering 1–10 (MLRSTSTVTL) has biased composition (polar residues). The signal sequence occupies residues 1–20 (MLRSTSTVTLLSGGAARTPG). A disordered region spans residues 1–23 (MLRSTSTVTLLSGGAARTPGAPS). 2 coiled-coil regions span residues 96-142 (QLKE…SHAQ) and 174-418 (LQKT…TQAK). The short motif at 424–425 (RE) is the Required for DYNLL1-binding element.

The protein belongs to the MYZAP family. Interacts with DSP, MPRIP and TJP1/ZO1. Interaction with MPRIP inhibits the activation of transcription factor SRF. Interacts with GRIN1. Interacts with DYNLL1. Detected in heart, liver, skeletal muscle, placenta, small intestine, lung, prostate and testis. Expressed in arrector pili muscle (at protein level).

The protein resides in the cytoplasm. It localises to the cytoskeleton. Its subcellular location is the cell membrane. The protein localises to the myofibril. It is found in the sarcomere. The protein resides in the i band. It localises to the z line. Its subcellular location is the cell junction. In terms of biological role, plays a role in cellular signaling via Rho-related GTP-binding proteins and subsequent activation of transcription factor SRF. Targets TJP1 to cell junctions. In cortical neurons, may play a role in glutaminergic signal transduction through interaction with the NMDA receptor subunit GRIN1. In Homo sapiens (Human), this protein is Myocardial zonula adherens protein (MYZAP).